The sequence spans 926 residues: MEQNIISTIRDECIRHRSKYLTIAQLTAIAEAKINEFIITGKAKDQDLSSLLDKCIDILSIYKKNSKDIKNIISCKNKGAMISSNSVMIIQLNYVYYKVIHIIVTTNIPHLSEFAKIKLHKSTSDEGNGNNNNNEFQLMNIYNTLLETLLKDENIAKIKSFIKSSIKQTKLNHEQEECNLMRTGSYITSNQLNSLISSSANSTSSQMEILLIDIRSRLEFNKSHIDTKNIICLEPISFKMSYSDHDLEKKSLITSPNSEIKMFQSRNLFKFIILYTDANEYNVKQQSVLLDILVNHSFEKPISDDFTKIFILESGFPGWLKSNYGSQVSSSSPSNNNIKDDSVYINGNTSGLSLQHLPKMSPSIRHSMDDSMKEMLVAPTPLNHLQQQQQQQSDNDHVLKRSSSFKKLFSNYTSPNPKNSNSNLYSISSLSISSSPSPLPLHSPDPVKGNSLPINYPETPHLWKNSETDFMTNQREQLNHNSFAHIAPINTKAITSPSRTATPKLQRFPQTISMNLNMNSNGHSSATSTIQPSCLSLSNNDSLDHTDVTPTSSHNYDLDFAVGLENLGNSCYMNCIIQCILGTHELTQIFLDDSYAKHININSKLGSKGILAKYFARLVHMMYKEQVDGSKKISISPIKFKLACGSVNSLFKTASQQDCQEFCQFLLDGLHEDLNQCGSNPPLKELSQEAEARREKLSLRIASSIEWERFLTTDFSVIVDLFQGQYASRLKCKVCSHTSTTYQPFTVLSIPIPKKNSRNNITIEDCFREFTKCENLEVDEQWLCPHCKKRQPSTKQLTITRLPRNLIVHLKRFDNLLNKNNDFVIYPFLLDLTPFWANDFDGVFPPGVNDDELPIRGQIPPFKYELYGVACHFGTLYGGHYTAYVKKGLKKGWLYFDDTKYKPVKNKADAINSNAYVLFYHRVYGV.

The region spanning 205–328 (SQMEILLIDI…WLKSNYGSQV (124 aa)) is the Rhodanese domain. Phosphoserine is present on Ser443. One can recognise a USP domain in the interval 562-923 (VGLENLGNSC…NAYVLFYHRV (362 aa)). The Nucleophile role is filled by Cys571. Residue His880 is the Proton acceptor of the active site.

The protein belongs to the peptidase C19 family. In terms of assembly, interacts with BRO1, RFU1 and VPS32. Associates with the 26S proteasome.

It is found in the cytoplasm. The protein resides in the late endosome membrane. It catalyses the reaction Thiol-dependent hydrolysis of ester, thioester, amide, peptide and isopeptide bonds formed by the C-terminal Gly of ubiquitin (a 76-residue protein attached to proteins as an intracellular targeting signal).. RFU1 is an inhibitor of deubiquitination activity. In terms of biological role, ubiquitin thioesterase that acts at the late endosome/prevacuolar compartment to recover ubiquitin from ubiquitinated membrane proteins en route to the vacuole. Also removes ubiquitin from soluble proteins targeted to proteasomes. Is essential to maintain a normal level of free ubiquitin. Involved in the ammonium-induced down-regulation of the GAP1 permease and the UME3 destruction in response to oxidative stress. Has a role in the RAD9 checkpoint response to TOP1 poisons. Required for promoting coordination of DNA replication and avoids DNA overreplication. This is Ubiquitin carboxyl-terminal hydrolase 4 (DOA4) from Saccharomyces cerevisiae (strain YJM789) (Baker's yeast).